The primary structure comprises 253 residues: Coenzyme F420:L-glutamate ligase (253 aa).

Residues 9-12 (LPEI), 38-39 (ST), and Lys-43 each bind GTP. Asp-113 lines the a divalent metal cation pocket. Residue Asn-116 participates in GTP binding. A divalent metal cation-binding residues include Asp-150, Thr-151, and Glu-208. 206–213 (SGEGDDGT) serves as a coordination point for GTP.

This sequence belongs to the CofE family. Homodimer. Mg(2+) is required as a cofactor. It depends on Mn(2+) as a cofactor. The cofactor is K(+).

It carries out the reaction oxidized coenzyme F420-0 + GTP + L-glutamate = oxidized coenzyme F420-1 + GDP + phosphate + H(+). The catalysed reaction is oxidized coenzyme F420-1 + GTP + L-glutamate = oxidized coenzyme F420-2 + GDP + phosphate + H(+). It functions in the pathway cofactor biosynthesis; coenzyme F420 biosynthesis. Functionally, catalyzes the GTP-dependent successive addition of two or more gamma-linked L-glutamates to the L-lactyl phosphodiester of 7,8-didemethyl-8-hydroxy-5-deazariboflavin (F420-0) to form coenzyme F420-0-glutamyl-glutamate (F420-2) or polyglutamated F420 derivatives. In Halobacterium salinarum (strain ATCC 29341 / DSM 671 / R1), this protein is Coenzyme F420:L-glutamate ligase.